Reading from the N-terminus, the 139-residue chain is Actin-depolymerizing factor 1 (139 aa).

An ADF-H domain is found at 5-139 (ASGMAVHDDC…DLDVFRSRAN (135 aa)). S6 is subject to Phosphoserine; by CPK3.

This sequence belongs to the actin-binding proteins ADF family. As to quaternary structure, interacts with the 14-3-3-like protein GRF6/AFT1. Phosphorylation at Ser-6 by CPK3/CDPK6 inhibits actin-depolimerizing activity. In terms of tissue distribution, expressed in vascular tissues of all organs.

It is found in the cytoplasm. It localises to the cytoskeleton. In terms of biological role, actin-depolymerizing protein. Stimulates F-actin depolymerization. Involved in plant development, cell organ expansion and flowering by controlling breakdown of thick actin cables. Severs actin filaments or bundles and promotes actin cytoskeleton disassembly. Binds monomeric actin (G-actin) with a marked preference for the ADP-loaded form and inhibits the rate of nucleotide exchange on G-actin. The chain is Actin-depolymerizing factor 1 (ADF1) from Arabidopsis thaliana (Mouse-ear cress).